A 592-amino-acid chain; its full sequence is Transducer of Cdc42-dependent actin assembly protein 1 homolog (592 aa).

Residues 3–267 (DSCSWDQLWD…DIGLIDPSRD (265 aa)) enclose the F-BAR domain. Disordered stretches follow at residues 343-366 (FGGGTADKKTDSGDYGTLPPQQRA) and 447-519 (SATS…DELY). The region spanning 359-436 (TLPPQQRARK…IQKFKILLDD (78 aa)) is the REM-1 domain. A coiled-coil region spans residues 363–441 (QQRARKIAGK…ILLDDVNAQL (79 aa)). The span at 447 to 457 (SATSVGGSDTP) shows a compositional bias: polar residues. Residues 459–474 (SIRSVSSASSGVTSRV) are compositionally biased toward low complexity. Over residues 495–510 (FSGSNGGSDTDPTING) the composition is skewed to polar residues. Residues 527-589 (PVLGEAIAQF…PSSYLKVTWF (63 aa)) enclose the SH3 domain.

This sequence belongs to the FNBP1 family. In terms of assembly, interacts (via SH3 domain) with wsp-1. Interacts with cdc-42 and (via SH3 domain) with wve-1. Expressed in the germline and specifically in the gonads.

It is found in the cell junction. The protein localises to the apical cell membrane. The protein resides in the basolateral cell membrane. It localises to the cytoplasmic vesicle. Its subcellular location is the cytoplasm. It is found in the perinuclear region. The protein localises to the recycling endosome. Functionally, plays a role in protein trafficking, actin organization and embryonic morphogenesis. Potentially acts as a cdc-42 effector. May play a role in hypodermal P-cell nuclear positioning. Together with toca-2, is required for protein trafficking regulating yolk protein clathrin-mediated endocytosis by oocytes during oogenesis and retrograde recycling and the sorting of recycling endosome cargo proteins such as mig-14. Also, together with toca-2, controls the distribution of actin at cell junctions. The chain is Transducer of Cdc42-dependent actin assembly protein 1 homolog from Caenorhabditis elegans.